We begin with the raw amino-acid sequence, 716 residues long: Epidermal growth factor receptor kinase substrate 8-like protein 1 (716 aa).

Residues 35–164 enclose the PTB domain; sequence QYHVNHLVTF…LQNYRSGRGE (130 aa). 5 disordered regions span residues 175–194, 203–249, 404–472, 528–582, and 600–628; these read EELRRGASPAAETPPLQRRP, VEPS…GPEL, PGVE…ETES, YNIL…SLDP, and SRLAQGRSGPSRVTPGPRAQEPQLSPRSE. Serine 182 bears the Phosphoserine mark. Threonine 187 is modified (phosphothreonine). Over residues 435-446 the composition is skewed to basic and acidic residues; sequence PWEDPVEKQLQH. A compositionally biased stretch (polar residues) spans 453 to 464; sequence QSAPQVAVNGQQ. Residues 477–536 form the SH3 domain; that stretch reads KARKWVLCNYDFQARNGSELSVKHRDVLEVLDDRRKWWKVRDHQGQEGYVPYNILTPHPG. Pro residues predominate over residues 553 to 563; the sequence is TPPPPPAPAPA. A coiled-coil region spans residues 682 to 713; that stretch reads VQRALLEDREKVSELEAVMEKQKKKVEGETKT.

The protein belongs to the EPS8 family. As to quaternary structure, interacts with ABI1. Part of a complex that contains SOS1, ABI1 and EPS8L2. Associates with F-actin. In terms of tissue distribution, detected in placenta, skin, mammary gland, bone marrow and stomach.

It localises to the cytoplasm. Its function is as follows. Stimulates guanine exchange activity of SOS1. May play a role in membrane ruffling and remodeling of the actin cytoskeleton. The polypeptide is Epidermal growth factor receptor kinase substrate 8-like protein 1 (Eps8l1) (Mus musculus (Mouse)).